The primary structure comprises 149 residues: Large ribosomal subunit protein uL24 (149 aa).

The tract at residues 114 to 149 (RKIIERSGGTPEVEAVPEKSEEEKEEKEKEEEKSEE) is disordered. A compositionally biased stretch (basic and acidic residues) spans 129–149 (VPEKSEEEKEEKEKEEEKSEE).

This sequence belongs to the universal ribosomal protein uL24 family. As to quaternary structure, part of the 50S ribosomal subunit.

Functionally, one of two assembly initiator proteins, it binds directly to the 5'-end of the 23S rRNA, where it nucleates assembly of the 50S subunit. In terms of biological role, located at the polypeptide exit tunnel on the outside of the subunit. In Methanopyrus kandleri (strain AV19 / DSM 6324 / JCM 9639 / NBRC 100938), this protein is Large ribosomal subunit protein uL24.